Here is a 111-residue protein sequence, read N- to C-terminus: Gene 21 protein (111 aa).

The polypeptide is Gene 21 protein (21) (Mycobacterium phage D29 (Mycobacteriophage D29)).